The chain runs to 596 residues: UDP-glucuronate:xylan alpha-glucuronosyltransferase 2 (596 aa).

The helical; Signal-anchor for type II membrane protein transmembrane segment at 17–37 threads the bilayer; the sequence is LIRFNLVLLGFSFLLYTAIFF. Residues Asp395 and Asp397 each coordinate Mn(2+). Substrate contacts are provided by residues 395–397, 424–426, 451–455, and 504–509; these read DAD, NSG, NGGDQ, and HYLGWK. His504 contributes to the Mn(2+) binding site.

This sequence belongs to the glycosyltransferase 8 family. Glycogenin subfamily. Requires Mn(2+) as cofactor.

The protein resides in the golgi apparatus membrane. Glycosyltransferase required for the addition of both glucuronic acid and 4-O-methylglucuronic acid branches to xylan in stem cell walls. In association with GUX1, is responsible for almost all of the substitutions of the xylan backbone in stem glucuronoxylan. In Arabidopsis thaliana (Mouse-ear cress), this protein is UDP-glucuronate:xylan alpha-glucuronosyltransferase 2 (GUX2).